We begin with the raw amino-acid sequence, 337 residues long: tRNA N6-adenosine threonylcarbamoyltransferase (337 aa).

Fe cation-binding residues include His-111 and His-115. Substrate-binding positions include Leu-134–Gly-138, Asp-167, Gly-180, and Asn-272. Asp-300 is a binding site for Fe cation.

The protein belongs to the KAE1 / TsaD family. Fe(2+) is required as a cofactor.

It localises to the cytoplasm. The catalysed reaction is L-threonylcarbamoyladenylate + adenosine(37) in tRNA = N(6)-L-threonylcarbamoyladenosine(37) in tRNA + AMP + H(+). Required for the formation of a threonylcarbamoyl group on adenosine at position 37 (t(6)A37) in tRNAs that read codons beginning with adenine. Is involved in the transfer of the threonylcarbamoyl moiety of threonylcarbamoyl-AMP (TC-AMP) to the N6 group of A37, together with TsaE and TsaB. TsaD likely plays a direct catalytic role in this reaction. The chain is tRNA N6-adenosine threonylcarbamoyltransferase from Escherichia coli O127:H6 (strain E2348/69 / EPEC).